The sequence spans 89 residues: Ixosin-B (89 aa).

Residues 1–26 form the signal peptide; the sequence is MASGWTHRLLLLAAVVTLGATPIAAA. A propeptide spanning residues 27 to 57 is cleaved from the precursor; that stretch reads SMEYLVTAPGYLTPNADIKITAVVTNPSSAG. Residues 68–89 form a disordered region; sequence SGIQPEQHSSGKSDVRRWRSRY. A compositionally biased stretch (basic and acidic residues) spans 76–89; sequence SSGKSDVRRWRSRY.

In terms of biological role, has antifungal activity against C.albicans. Has antibacterial activity against the Gram-positive bacterium S.aureus and the Gram-negative bacterium E.coli. Lacks hemolytic activity against rabbit erythrocytes. In Ixodes sinensis (Hard tick), this protein is Ixosin-B.